The chain runs to 569 residues: Anti-Muellerian hormone type-2 receptor (569 aa).

Positions 1-17 (MLGTLGLWALLPAAVQA) are cleaved as a signal peptide. The Extracellular segment spans residues 18–148 (PPNRRTCVFF…AAPGESPWMA (131 aa)). 2 disulfides stabilise this stretch: Cys55/Cys79 and Cys92/Cys109. Asn66 carries an N-linked (GlcNAc...) asparagine glycan. The N-linked (GlcNAc...) asparagine glycan is linked to Asn119. A helical transmembrane segment spans residues 149 to 169 (LALLGLVLLLLLLLGGIVVAL). Topologically, residues 170–569 (LQRKAYRVQS…PGAACASSDV (400 aa)) are cytoplasmic. One can recognise a Protein kinase domain in the interval 201–511 (LCFSQVIREG…RLVALVHPQE (311 aa)). Residues 207–215 (IREGGHAAV) and Lys228 contribute to the ATP site. Asp331 (proton acceptor) is an active-site residue. A disordered region spans residues 512–535 (AQPCPEGRPHSHPEDWPPAPAPAP).

It belongs to the protein kinase superfamily. TKL Ser/Thr protein kinase family. TGFB receptor subfamily. In terms of assembly, interacts with type I receptor ACVR1. Requires Mg(2+) as cofactor. Mn(2+) serves as cofactor.

The protein resides in the membrane. The enzyme catalyses L-threonyl-[receptor-protein] + ATP = O-phospho-L-threonyl-[receptor-protein] + ADP + H(+). The catalysed reaction is L-seryl-[receptor-protein] + ATP = O-phospho-L-seryl-[receptor-protein] + ADP + H(+). On ligand binding, forms a receptor complex consisting of two type II and two type I transmembrane serine/threonine kinases. Type II receptors phosphorylate and activate type I receptors which autophosphorylate, then bind and activate SMAD transcriptional regulators. Receptor for anti-Muellerian hormone. The polypeptide is Anti-Muellerian hormone type-2 receptor (AMHR2) (Oryctolagus cuniculus (Rabbit)).